The primary structure comprises 859 residues: MSLGGIVDAILGKDDRPKVKGRVILMKKNVLDFINIGASVVDGISDLLGQKVSIQLISGSVNYDGLEGKLSNPAYLESWLTDITPITAGESTFSVTFDWDRDEFGVPGAFIIKNLHLNEFFLKSLTLEDVPNYGKIHFVCNSWVYPAFRYKSDRIFFANQAYLPSETPQPLRKYRENELVALRGDGTGKLEEWDRVYDYACYNDLGEPDKGEEYARPILGGSSEYPYPRRGRTGREPTKADPNCESRNPLPMSLDIYVPRDERFGHVKKSDFLTSSLKSSLQTLLPAFKALCDNTPNEFNSFADVLNLYEGGIKLPEGPWLKAITDNISSEILKDILQTDGQGLLKYPTPQVIQGDKTAWRTDEEFGREMLAGSNPVLISRLQEFPPKSKLDPTIYGNQNSTITTEHVQDKLNGLTVNEAIKSNRLFILNHHDIVMPLLRKINMSANTKAYASRTLLFLQDDRTLKPLAIELSLPHPDGDQFGTVSKVYTPADQGVEGSIWQFAKAYVAVNDMGIHQLISHWLNTHAVIEPFVVATNRHLSVLHPIHKLLHPHFRNTMNINALARETLTYDGGFETSLFPAKYSMEMSAAAYKDWVFPEQALPADLLKRGVAVEDLSSPHGIRLLILDYPYAVDGLEIWAAIKSWVTEYCKFYYKSDETVEKDTELQAWWKELREEGHGDKKDEAWWPKLQTRQELRDCCTIIIWIASALHAALHFGLYSYAGYLPNRPTLSCNLMPEPGSVEYEELKTNPDKVFLKTFVPQLQSLLEISIFEVSSRHASDEVYLGQRDSIEWTKDKEPLVAFERFGKMLSDIENRIMIMNSHKSWKNRSGPVNVPYTLLFPTSEEGLTGKGIPNSVSI.

One can recognise a PLAT domain in the interval 34–158 (INIGASVVDG…RYKSDRIFFA (125 aa)). A Lipoxygenase domain is found at 161–859 (AYLPSETPQP…GKGIPNSVSI (699 aa)). Positions 213-246 (EYARPILGGSSEYPYPRRGRTGREPTKADPNCES) are disordered. The segment covering 233–244 (TGREPTKADPNC) has biased composition (basic and acidic residues). Residues His521, His526, His711, and Ile859 each coordinate Fe cation.

This sequence belongs to the lipoxygenase family. Monomer. Requires Fe cation as cofactor. In terms of tissue distribution, fruit specific.

Its subcellular location is the cytoplasm. The catalysed reaction is (9Z,12Z)-octadecadienoate + O2 = (9S)-hydroperoxy-(10E,12Z)-octadecadienoate. It functions in the pathway lipid metabolism; oxylipin biosynthesis. Functionally, plant lipoxygenase may be involved in a number of diverse aspects of plant physiology including growth and development, pest resistance, and senescence or responses to wounding. It catalyzes the hydroperoxidation of lipids containing a cis,cis-1,4-pentadiene structure. The chain is Linoleate 9S-lipoxygenase B (LOX1.2) from Solanum lycopersicum (Tomato).